The chain runs to 212 residues: Peptide methionine sulfoxide reductase MsrA (212 aa).

Cys52 is a catalytic residue.

Belongs to the MsrA Met sulfoxide reductase family.

The enzyme catalyses L-methionyl-[protein] + [thioredoxin]-disulfide + H2O = L-methionyl-(S)-S-oxide-[protein] + [thioredoxin]-dithiol. It catalyses the reaction [thioredoxin]-disulfide + L-methionine + H2O = L-methionine (S)-S-oxide + [thioredoxin]-dithiol. Has an important function as a repair enzyme for proteins that have been inactivated by oxidation. Catalyzes the reversible oxidation-reduction of methionine sulfoxide in proteins to methionine. The sequence is that of Peptide methionine sulfoxide reductase MsrA from Escherichia coli O17:K52:H18 (strain UMN026 / ExPEC).